The following is a 287-amino-acid chain: Glutamate racemase (287 aa).

A compositionally biased stretch (polar residues) spans 1–15; sequence MATKPQDANTTSREA. A disordered region spans residues 1–25; that stretch reads MATKPQDANTTSREAITSKADSPPR. Residues 32–33 and 64–65 contribute to the substrate site; these read DS and YG. The active-site Proton donor/acceptor is the Cys96. 97–98 lines the substrate pocket; that stretch reads NT. The Proton donor/acceptor role is filled by Cys208. 209-210 provides a ligand contact to substrate; sequence TH.

Belongs to the aspartate/glutamate racemases family.

The catalysed reaction is L-glutamate = D-glutamate. It participates in cell wall biogenesis; peptidoglycan biosynthesis. Functionally, provides the (R)-glutamate required for cell wall biosynthesis. In Yersinia pseudotuberculosis serotype O:3 (strain YPIII), this protein is Glutamate racemase.